The following is a 256-amino-acid chain: MSEKRVEKKLIHYVKKALNDYHMINTGDRVMVCLSGGKDSYTLLSLLNSIRIEGNYKFDIFAFVLDQSQPGWDDSALRGWLDDKKIPYEILTRDTYSIVKEKIPAGKTYCSLCSRLRRGIIYRYAEEQGFSKIALGHHRDDLIQTLLMSVFYNGQIRSMPPKLLSDNKRHVLIRPLAYCQERDIIKYAMEQQFPLIPCNLCGSQKNLMRQRVKRLISDLAKENPKVPSNMLRALSNIKPSQLMDHELWNFRELNVD.

The PP-loop motif signature appears at 35-40 (SGGKDS). [4Fe-4S] cluster-binding residues include cysteine 110, cysteine 113, and cysteine 201.

The protein belongs to the TtcA family. In terms of assembly, homodimer. The cofactor is Mg(2+). [4Fe-4S] cluster serves as cofactor.

Its subcellular location is the cytoplasm. It catalyses the reaction cytidine(32) in tRNA + S-sulfanyl-L-cysteinyl-[cysteine desulfurase] + AH2 + ATP = 2-thiocytidine(32) in tRNA + L-cysteinyl-[cysteine desulfurase] + A + AMP + diphosphate + H(+). It participates in tRNA modification. Functionally, catalyzes the ATP-dependent 2-thiolation of cytidine in position 32 of tRNA, to form 2-thiocytidine (s(2)C32). The sulfur atoms are provided by the cysteine/cysteine desulfurase (IscS) system. In Coxiella burnetii (strain Dugway 5J108-111), this protein is tRNA-cytidine(32) 2-sulfurtransferase.